Reading from the N-terminus, the 727-residue chain is Glycerol-3-phosphate dehydrogenase, mitochondrial (727 aa).

A mitochondrion-targeting transit peptide spans 1–42 (MAFQKAVKGTILVGGGALATVLGLSQFAHYRRKQMNLAYVKA). 71–99 (DILVIGGGATGSGCALDAVTRGLKTALVE) lines the FAD pocket. Tyr601 is modified (phosphotyrosine). 2 EF-hand domains span residues 623–658 (SDID…INVQ) and 659–694 (MDEN…IQKG). Ca(2+) is bound by residues Asp672, Asn674, Asn676, Gln678, and Glu683.

It belongs to the FAD-dependent glycerol-3-phosphate dehydrogenase family. FAD serves as cofactor.

The protein resides in the mitochondrion. The catalysed reaction is a quinone + sn-glycerol 3-phosphate = dihydroxyacetone phosphate + a quinol. It functions in the pathway polyol metabolism; glycerol degradation via glycerol kinase pathway; glycerone phosphate from sn-glycerol 3-phosphate (anaerobic route): step 1/1. With respect to regulation, calcium-binding enhance the activity of the enzyme. Calcium-responsive mitochondrial glycerol-3-phosphate dehydrogenase which seems to be a key component of the pancreatic beta-cell glucose-sensing device. The polypeptide is Glycerol-3-phosphate dehydrogenase, mitochondrial (Homo sapiens (Human)).